A 304-amino-acid chain; its full sequence is MKKKILFWILGIIGIMIIGGGVYAYNVYSSVSKTLDEVHKPLKRDKDSNGVETAKISKSEPVSILLLGADERGEDKGRSDSLMVITLNPKNNSMKTVSIPRDTYTEIVGKGKSDKINHAYAFGGVDMSVATVEKFLSVPINYYIEVNMEGFKDIVDAVGGVDVNNDLEFTANGHHFAKGNVHLTGDQALAFTRMRKEDPRGDFGRQMRQRQVMQAVIKKGASFSSLSSYGDVLTAIQKNVKTNLTQDQMFDMQKNYKNCLQNSEEIQIPGDGHKAADGIWYYYVPDAAKQDITNKLRAHLELTK.

At 1–4 the chain is on the cytoplasmic side; it reads MKKK. Residues 5–25 form a helical; Signal-anchor for type II membrane protein membrane-spanning segment; that stretch reads ILFWILGIIGIMIIGGGVYAY. Topologically, residues 26–304 are extracellular; it reads NVYSSVSKTL…KLRAHLELTK (279 aa).

The protein belongs to the LytR/CpsA/Psr (LCP) family.

It localises to the cell membrane. It functions in the pathway cell wall biogenesis. Its function is as follows. May catalyze the final step in cell wall teichoic acid biosynthesis, the transfer of the anionic cell wall polymers (APs) from their lipid-linked precursor to the cell wall peptidoglycan (PG). The polypeptide is Polyisoprenyl-teichoic acid--peptidoglycan teichoic acid transferase TagU (Bacillus mycoides (strain KBAB4) (Bacillus weihenstephanensis)).